Here is a 110-residue protein sequence, read N- to C-terminus: Large ribosomal subunit protein uL22 (110 aa).

Belongs to the universal ribosomal protein uL22 family. As to quaternary structure, part of the 50S ribosomal subunit.

Its function is as follows. This protein binds specifically to 23S rRNA; its binding is stimulated by other ribosomal proteins, e.g. L4, L17, and L20. It is important during the early stages of 50S assembly. It makes multiple contacts with different domains of the 23S rRNA in the assembled 50S subunit and ribosome. The globular domain of the protein is located near the polypeptide exit tunnel on the outside of the subunit, while an extended beta-hairpin is found that lines the wall of the exit tunnel in the center of the 70S ribosome. This chain is Large ribosomal subunit protein uL22, found in Shewanella amazonensis (strain ATCC BAA-1098 / SB2B).